Reading from the N-terminus, the 115-residue chain is DNA-directed RNA polymerase subunit Rpo4 (115 aa).

Belongs to the eukaryotic RPB4 RNA polymerase subunit family. In terms of assembly, part of the RNA polymerase complex. Forms a stalk with Rpo7 that extends from the main structure.

It is found in the cytoplasm. The enzyme catalyses RNA(n) + a ribonucleoside 5'-triphosphate = RNA(n+1) + diphosphate. Functionally, DNA-dependent RNA polymerase (RNAP) catalyzes the transcription of DNA into RNA using the four ribonucleoside triphosphates as substrates. This subunit is less well bound than the others. This is DNA-directed RNA polymerase subunit Rpo4 from Methanocaldococcus jannaschii (strain ATCC 43067 / DSM 2661 / JAL-1 / JCM 10045 / NBRC 100440) (Methanococcus jannaschii).